A 92-amino-acid polypeptide reads, in one-letter code: Small ribosomal subunit protein uS19c (92 aa).

Belongs to the universal ribosomal protein uS19 family.

The protein localises to the plastid. It localises to the chloroplast. Protein S19 forms a complex with S13 that binds strongly to the 16S ribosomal RNA. This is Small ribosomal subunit protein uS19c from Phaeodactylum tricornutum (strain CCAP 1055/1).